A 281-amino-acid chain; its full sequence is MTVPRVRSYVPGLDEILFGGIPERSVVLLSGGPGTGKSILGKQFLYNGLKRGDAGVFVALEEHPVAVRRSFRHFGWDIAQYEREGKFAIVDAFTGGVGTAAQRERYIVKQVDDVHELSDVLRQAIRDTGARRVVIDSVSTLYLTKPAVARGTIMTLKRVIAGLGCTAFFVSQVSVGERGFGGPGVEHAVDGIIRLDLDEFDGRLYRSIIVWKMRDTKHSMVRHPMEIKDGGIEIMWDKYIKITGSSVRIEPLPKEEAEAMRKAVEDVEKQPAPKKIEIEEE.

One can recognise a KaiC domain in the interval 4 to 248 (PRVRSYVPGL…YIKITGSSVR (245 aa)). 31-38 (GGPGTGKS) serves as a coordination point for ATP.

The protein belongs to the UPF0273 family.

The polypeptide is UPF0273 protein PAE3143 (Pyrobaculum aerophilum (strain ATCC 51768 / DSM 7523 / JCM 9630 / CIP 104966 / NBRC 100827 / IM2)).